Reading from the N-terminus, the 227-residue chain is ATP-dependent dethiobiotin synthetase BioD (227 aa).

Position 13–18 (13–18 (DVGKTV)) interacts with ATP. T17 provides a ligand contact to Mg(2+). K38 is an active-site residue. ATP-binding positions include D55, 116–119 (EGAG), 176–177 (NR), and 205–207 (PYI). Mg(2+) is bound by residues D55 and E116.

The protein belongs to the dethiobiotin synthetase family. In terms of assembly, homodimer. The cofactor is Mg(2+).

It localises to the cytoplasm. It catalyses the reaction (7R,8S)-7,8-diammoniononanoate + CO2 + ATP = (4R,5S)-dethiobiotin + ADP + phosphate + 3 H(+). The protein operates within cofactor biosynthesis; biotin biosynthesis; biotin from 7,8-diaminononanoate: step 1/2. Its function is as follows. Catalyzes a mechanistically unusual reaction, the ATP-dependent insertion of CO2 between the N7 and N8 nitrogen atoms of 7,8-diaminopelargonic acid (DAPA, also called 7,8-diammoniononanoate) to form a ureido ring. This is ATP-dependent dethiobiotin synthetase BioD from Vibrio campbellii (strain ATCC BAA-1116).